The chain runs to 103 residues: Large ribosomal subunit protein uL24 (103 aa).

Belongs to the universal ribosomal protein uL24 family. Part of the 50S ribosomal subunit.

One of two assembly initiator proteins, it binds directly to the 5'-end of the 23S rRNA, where it nucleates assembly of the 50S subunit. Functionally, one of the proteins that surrounds the polypeptide exit tunnel on the outside of the subunit. This Synechococcus sp. (strain CC9311) protein is Large ribosomal subunit protein uL24.